Consider the following 589-residue polypeptide: ATP-dependent lipid A-core flippase (589 aa).

6 consecutive transmembrane segments (helical) span residues 33-53 (VLAI…AWII), 70-90 (LWVP…TFAS), 148-168 (VVVL…MTYL), 170-190 (GWLV…VTAA), 262-282 (LGAV…VILE), and 283-303 (TISP…LPPL). Positions 33–315 (VLAIVCMVLA…VIGVNAEIQK (283 aa)) constitute an ABC transmembrane type-1 domain. The ABC transporter domain occupies 347 to 583 (IEFDRVAFRY…NGHYASLHRV (237 aa)). Residue 381 to 388 (GRSGSGKT) participates in ATP binding.

Belongs to the ABC transporter superfamily. Lipid exporter (TC 3.A.1.106) family. In terms of assembly, homodimer.

It localises to the cell inner membrane. It carries out the reaction ATP + H2O + lipid A-core oligosaccharideSide 1 = ADP + phosphate + lipid A-core oligosaccharideSide 2.. Functionally, involved in lipopolysaccharide (LPS) biosynthesis. Translocates lipid A-core from the inner to the outer leaflet of the inner membrane. Transmembrane domains (TMD) form a pore in the inner membrane and the ATP-binding domain (NBD) is responsible for energy generation. This Alkalilimnicola ehrlichii (strain ATCC BAA-1101 / DSM 17681 / MLHE-1) protein is ATP-dependent lipid A-core flippase.